We begin with the raw amino-acid sequence, 599 residues long: MKNIRNFSIIAHIDHGKSTLSDRIIQICGGLSDREMEAQVLDSMDLERERGITIKAQSVTLDYKASDGETYQLNFIDTPGHVDFSYEVSRSLAACEGALLVVDAGQGVEAQTLANCYTAMEMDLEVVPVLNKIDLPAADPERVAEEIEDIVGIDATDAVRCSAKTGVGVQDVLERLVRDIPPPEGDPEGPLQALIIDSWFDNYLGVVSLIRIKNGTLRKGDKVKVMSTGQTYNADRLGIFTPKQVDRTELKCGEVGWLVCAIKDIHGAPVGDTLTLARNPAEKALPGFKKVKPQVYAGLFPVRSDDYEAFRDALGKLSLNDASLFYEPESSSALGFGFRCGFLGLLHMEIIQERLEREYDLDLITTAPTVVYEVETTSREVIYVDSPSKLPAVNNIYELREPIAECHMLLPQAYLGNVITLCVEKRGVQTNMVYHGNQVALTYEIPMAEVVLDFFDRLKSTSRGYASLDYNFKRFQASDMVRVDVLINGERVDALALITHRDNSQNRGRELVEKMKDLIPRQQFDIAIQAAIGTHIIARSTVKQLRKNVLAKCYGGDISRKKKLLQKQKEGKKRMKQIGNVELPQEAFLAILHVGKDNK.

A tr-type G domain is found at 2–184 (KNIRNFSIIA…RLVRDIPPPE (183 aa)). Residues 14–19 (DHGKST) and 131–134 (NKID) contribute to the GTP site.

It belongs to the TRAFAC class translation factor GTPase superfamily. Classic translation factor GTPase family. LepA subfamily.

The protein resides in the cell inner membrane. It carries out the reaction GTP + H2O = GDP + phosphate + H(+). In terms of biological role, required for accurate and efficient protein synthesis under certain stress conditions. May act as a fidelity factor of the translation reaction, by catalyzing a one-codon backward translocation of tRNAs on improperly translocated ribosomes. Back-translocation proceeds from a post-translocation (POST) complex to a pre-translocation (PRE) complex, thus giving elongation factor G a second chance to translocate the tRNAs correctly. Binds to ribosomes in a GTP-dependent manner. This is Elongation factor 4 from Escherichia coli (strain SE11).